The sequence spans 134 residues: UPF0412 protein YaaI (134 aa).

Positions 1-23 (MRSVLTISASLLFGLALSSVAHA) are cleaved as a signal peptide.

Belongs to the UPF0412 family.

This Salmonella paratyphi B (strain ATCC BAA-1250 / SPB7) protein is UPF0412 protein YaaI.